The following is a 690-amino-acid chain: Lipase 2 (690 aa).

A signal peptide spans 1–37; the sequence is MLRGQEERKYSIRKYSIGVVSVLAATMFVVSSHEAQA. The span at 52–71 shows a compositional bias: polar residues; it reads LNQPGEQGNAITSHQMQSGK. The tract at residues 52 to 266 is disordered; that stretch reads LNQPGEQGNA…KPTDKNTDNK (215 aa). Positions 72-81 are enriched in basic and acidic residues; it reads QLDDMHKENG. 3 stretches are compositionally biased toward polar residues: residues 82–114, 124–171, and 185–206; these read KSGT…NDNQ, SKQS…QPSI, and PTST…AQDA. 2 stretches are compositionally biased toward basic and acidic residues: residues 225–237 and 257–266; these read IDAK…RQSE and KPTDKNTDNK. Catalysis depends on charge relay system residues Ser-412 and His-645.

The protein belongs to the AB hydrolase superfamily. Lipase family.

It is found in the secreted. The enzyme catalyses a triacylglycerol + H2O = a diacylglycerol + a fatty acid + H(+). This is Lipase 2 (lip2) from Staphylococcus aureus (strain NCTC 8325 / PS 47).